Here is a 526-residue protein sequence, read N- to C-terminus: Seipin-2 (526 aa).

A disordered region spans residues 33 to 77; sequence PIRSNSHQPSSLLRRRKSAHRRDLISSDIETEPSSSSDGFDVGEK. Residues 58–70 are compositionally biased toward low complexity; it reads SSDIETEPSSSSD. The next 4 membrane-spanning stretches (helical) occupy residues 195 to 215, 224 to 243, 258 to 278, and 483 to 503; these read SLLT…FDPF, FLMA…MNPF, FGWG…LLVS, and LFVW…LVCC.

It belongs to the seipin family. In terms of tissue distribution, expressed in seeds, seedlings, leaves, stems and roots. Not detected in flowers.

It is found in the endoplasmic reticulum membrane. In terms of biological role, involved in lipid metabolism and lipid droplet (LD) morphology, number, and size. Supports the formation of small-sized LDs and modulates triacylglycerol accumulation. Induces probably a reorganization of the endoplasmic reticulum into LD-forming domains. This is Seipin-2 from Arabidopsis thaliana (Mouse-ear cress).